A 276-amino-acid chain; its full sequence is Insulin-induced gene 1 protein (276 aa).

Disordered regions lie at residues 1–26 and 49–73; these read MPRL…PRAS and AAHG…QGSS. Topologically, residues 1–83 are cytoplasmic; it reads MPRLDDHLWR…SHVNSWHHHL (83 aa). A compositionally biased stretch (basic residues) spans 16–25; that stretch reads GTKHRSHPRA. The helical transmembrane segment at 84-106 threads the bilayer; sequence VQRSLVLFSVGVVLALVLNLLQV. The Extracellular segment spans residues 107–125; it reads QRNVTLFPDEVIATIFSSA. A helical transmembrane segment spans residues 126 to 143; that stretch reads WWVPPCCGTAAAVVGLLY. Residues 144-158 are Cytoplasmic-facing; the sequence is PCIDSHLGEPHKFKR. Residues lysine 155 and lysine 157 each participate in a glycyl lysine isopeptide (Lys-Gly) (interchain with G-Cter in ubiquitin) cross-link. A helical transmembrane segment spans residues 159 to 181; it reads EWASVMRCVAVFVGINHASAKLD. The Extracellular segment spans residues 182 to 184; sequence FAN. A helical transmembrane segment spans residues 185 to 203; it reads NVQLSLTLAALSLGLWWTF. The Cytoplasmic segment spans residues 204 to 208; that stretch reads DRSRS. Residue serine 206 is modified to Phosphoserine. The helical transmembrane segment at 209–230 threads the bilayer; that stretch reads GLGLGITIAFLATLITQLLVYN. Residues 231 to 244 lie on the Extracellular side of the membrane; the sequence is GVYQYTSPDFLYIR. A helical membrane pass occupies residues 245–262; sequence SWLPCIFFSGGVTVGNIG. Topologically, residues 263–276 are cytoplasmic; the sequence is RQLAMGVPEKPHSD. The KxHxx signature appears at 270–276; the sequence is PEKPHSD.

It belongs to the INSIG family. In terms of assembly, interacts with SCAP; interaction is direct and only takes place in the presence of sterols; it prevents interaction between SCAP and the coat protein complex II (COPII). Associates with the SCAP-SREBP complex (composed of SCAP and SREBF1/SREBP1 or SREBF2/SREBP2); association is mediated via its interaction with SCAP and only takes place in the presence of sterols. Interaction with SCAP is mutually exclusive with PAQR3. Interacts with HMGCR (via its SSD); the interaction, accelerated by sterols, leads to the recruitment of HMGCR to AMFR/gp78 for its ubiquitination by the sterol-mediated ERAD pathway. Interacts with AMFR/gp78 (via its membrane domain); the interaction recruits HMCR at the ER membrane for its ubiquitination and degradation by the sterol-mediated ERAD pathway. Interacts with SOAT2/ACAT2; leading to promote recruitment of AMFR/gp78 and subsequent ubiquitination of SOAT2/ACAT2. Interacts with RNF139. Interacts with RNF145. Phosphorylation at Ser-206 by PCK1 reduces binding to oxysterol, disrupting the interaction between INSIG1 and SCAP, thereby promoting nuclear translocation of SREBP proteins (SREBF1/SREBP1 or SREBF2/SREBP2) and subsequent transcription of downstream lipogenesis-related genes. Post-translationally, ubiquitinated by AMFR/gp78 in response to sterol deprivation, leading to its degradation: when the SCAP-SREBP complex becomes dissociated from INSIG1, INSIG1 is then ubiquitinated and degraded in proteasomes. Although ubiquitination is required for rapid INSIG1 degradation, it is not required for release of the SCAP-SREBP complex. Ubiquitinated by RNF139.

It is found in the endoplasmic reticulum membrane. Its function is as follows. Oxysterol-binding protein that mediates feedback control of cholesterol synthesis by controlling both endoplasmic reticulum to Golgi transport of SCAP and degradation of HMGCR. Acts as a negative regulator of cholesterol biosynthesis by mediating the retention of the SCAP-SREBP complex in the endoplasmic reticulum, thereby blocking the processing of sterol regulatory element-binding proteins (SREBPs) SREBF1/SREBP1 and SREBF2/SREBP2. Binds oxysterol, including 25-hydroxycholesterol, regulating interaction with SCAP and retention of the SCAP-SREBP complex in the endoplasmic reticulum. In presence of oxysterol, interacts with SCAP, retaining the SCAP-SREBP complex in the endoplasmic reticulum, thereby preventing SCAP from escorting SREBF1/SREBP1 and SREBF2/SREBP2 to the Golgi. Sterol deprivation or phosphorylation by PCK1 reduce oxysterol-binding, disrupting the interaction between INSIG1 and SCAP, thereby promoting Golgi transport of the SCAP-SREBP complex, followed by processing and nuclear translocation of SREBF1/SREBP1 and SREBF2/SREBP2. Also regulates cholesterol synthesis by regulating degradation of HMGCR: initiates the sterol-mediated ubiquitin-mediated endoplasmic reticulum-associated degradation (ERAD) of HMGCR via recruitment of the reductase to the ubiquitin ligases AMFR/gp78 and/or RNF139. Also regulates degradation of SOAT2/ACAT2 when the lipid levels are low: initiates the ubiquitin-mediated degradation of SOAT2/ACAT2 via recruitment of the ubiquitin ligases AMFR/gp78. This Bos taurus (Bovine) protein is Insulin-induced gene 1 protein.